Reading from the N-terminus, the 468-residue chain is Plant UBX domain-containing protein 7 (468 aa).

Methionine 1 carries the N-acetylmethionine modification. Positions 7–48 constitute a UBA-like domain; it reads SGDQQRLVSSFLEIAVGQTAETARQFLQATSWKLEEAIQLFY. 2 disordered regions span residues 138 to 168 and 299 to 329; these read KSPGIWEPDEGDSSASASASASASESASAPR and HFASLSKKRPRGSFSLTPHSKPKEDVAKDEE. Positions 150 to 166 are enriched in low complexity; that stretch reads SSASASASASASESASA. In terms of domain architecture, UIM spans 328-347; sequence EEEEELQRALAASLEDNNMK. A UBX domain is found at 385-466; that stretch reads DRSLQCRVGI…GVANSMISAT (82 aa).

In terms of assembly, interacts with CDC48A via its UBX domain and with ubiquitin via its N-terminal UBA-like domain. In terms of tissue distribution, expressed broadly in sporophyte and gametophyte cells.

Its subcellular location is the nucleus. Functionally, acts as a bridge between CDC48A and ubiquitin, suggesting a role in targeted protein degradation. The chain is Plant UBX domain-containing protein 7 from Arabidopsis thaliana (Mouse-ear cress).